A 574-amino-acid polypeptide reads, in one-letter code: Acetolactate synthase isozyme 3 large subunit (574 aa).

Position 51 (E51) interacts with thiamine diphosphate. Residues R153, 261–282 (HGTYEANMTMHNADVIFAVGVR), and 304–323 (DIDPTSISKTVTADIPIVGD) contribute to the FAD site. The tract at residues 397 to 477 (QHQMFAALYY…VLVVNLNNRY (81 aa)) is thiamine pyrophosphate binding. Residues D448 and N475 each contribute to the Mg(2+) site.

Belongs to the TPP enzyme family. Dimer of large and small chains. Requires Mg(2+) as cofactor. Thiamine diphosphate is required as a cofactor.

It catalyses the reaction 2 pyruvate + H(+) = (2S)-2-acetolactate + CO2. The protein operates within amino-acid biosynthesis; L-isoleucine biosynthesis; L-isoleucine from 2-oxobutanoate: step 1/4. It functions in the pathway amino-acid biosynthesis; L-valine biosynthesis; L-valine from pyruvate: step 1/4. Sensitive to valine inhibition. The polypeptide is Acetolactate synthase isozyme 3 large subunit (ilvI) (Escherichia coli (strain K12)).